Here is a 105-residue protein sequence, read N- to C-terminus: UPF0148 protein PH0795 (105 aa).

Belongs to the UPF0148 family.

The chain is UPF0148 protein PH0795 from Pyrococcus horikoshii (strain ATCC 700860 / DSM 12428 / JCM 9974 / NBRC 100139 / OT-3).